The sequence spans 677 residues: Fermitin family homolog 1 (677 aa).

In terms of domain architecture, FERM spans 96–653 (MLRLRLPNLK…HEYIGGYIFL (558 aa)). A phosphoserine mark is found at S170, S179, and S361. One can recognise a PH domain in the interval 337–433 (ESEVDEIEAA…EVVPNVNVAE (97 aa)).

This sequence belongs to the kindlin family. As to quaternary structure, interacts with the cytoplasmic domain of integrins ITGB1 and ITGB3.

Its subcellular location is the cytoplasm. It localises to the cytoskeleton. The protein resides in the cell junction. It is found in the focal adhesion. The protein localises to the cell projection. Its subcellular location is the ruffle membrane. Its function is as follows. Involved in cell adhesion. Contributes to integrin activation. When coexpressed with talin, potentiates activation of ITGA2B. Required for normal keratinocyte proliferation. Required for normal polarization of basal keratinocytes in skin, and for normal cell shape. Required for normal adhesion of keratinocytes to fibronectin and laminin, and for normal keratinocyte migration to wound sites. In Pongo abelii (Sumatran orangutan), this protein is Fermitin family homolog 1 (FERMT1).